A 477-amino-acid polypeptide reads, in one-letter code: tRNA-2-methylthio-N(6)-dimethylallyladenosine synthase (477 aa).

Positions 3–120 constitute an MTTase N-terminal domain; the sequence is KKLYIKTWGC…LPEMINELKG (118 aa). Positions 12, 49, 83, 157, 161, and 164 each coordinate [4Fe-4S] cluster. The 233-residue stretch at 143–375 folds into the Radical SAM core domain; the sequence is RAEGPTAFVS…QQRITQQALR (233 aa). Residues 378 to 441 form the TRAM domain; the sequence is RHMVGTEQRI…TNSLRGEVVR (64 aa).

Belongs to the methylthiotransferase family. MiaB subfamily. Monomer. [4Fe-4S] cluster serves as cofactor.

The protein resides in the cytoplasm. It carries out the reaction N(6)-dimethylallyladenosine(37) in tRNA + (sulfur carrier)-SH + AH2 + 2 S-adenosyl-L-methionine = 2-methylsulfanyl-N(6)-dimethylallyladenosine(37) in tRNA + (sulfur carrier)-H + 5'-deoxyadenosine + L-methionine + A + S-adenosyl-L-homocysteine + 2 H(+). Its function is as follows. Catalyzes the methylthiolation of N6-(dimethylallyl)adenosine (i(6)A), leading to the formation of 2-methylthio-N6-(dimethylallyl)adenosine (ms(2)i(6)A) at position 37 in tRNAs that read codons beginning with uridine. The polypeptide is tRNA-2-methylthio-N(6)-dimethylallyladenosine synthase (Alteromonas mediterranea (strain DSM 17117 / CIP 110805 / LMG 28347 / Deep ecotype)).